The chain runs to 517 residues: Xyloglucan galactosyltransferase XLT2 (517 aa).

Residues M1–S31 are disordered. Residues M1–R49 lie on the Cytoplasmic side of the membrane. Positions P20–S31 are enriched in polar residues. The chain crosses the membrane as a helical; Signal-anchor for type II membrane protein span at residues S50–L70. Topologically, residues R71 to R517 are lumenal. N250, N288, N377, and N449 each carry an N-linked (GlcNAc...) asparagine glycan.

Belongs to the glycosyltransferase 47 family. Interacts with CSLC4, FUT1, XXT2 and XXT5. As to expression, expressed in roots, hypocotyls, cotyledons, leaves, stems and flowers.

The protein resides in the golgi apparatus membrane. In terms of biological role, functions in xyloglucan synthesis by adding side chains to the xylosylated glucan backbone. Involved in galactosylating hemicellulose xyloglucan (XyG) at the second position of the XXXG motif to form XLXG. Associates with other xyloglucan-synthesizing enzymes to form multiprotein complexes for xyloglucan synthesis in the Golgi. The chain is Xyloglucan galactosyltransferase XLT2 from Arabidopsis thaliana (Mouse-ear cress).